A 675-amino-acid polypeptide reads, in one-letter code: Protein C-mannosyl-transferase DPY19L1 (675 aa).

Positions 1–22 (MEGRPPPEGRPPPRPRTGRAPR) are disordered. A run of 11 helical transmembrane segments spans residues 66 to 88 (LYYS…WMIM), 156 to 176 (ACFY…LFFI), 186 to 208 (LGGL…VMWT), 236 to 254 (LYRG…FMLP), 260 to 279 (FVLL…GYID), 286 to 303 (IIYI…LMFG), 309 to 325 (TSYY…ILAM), 334 to 354 (VSEL…TVIL), 414 to 434 (VVLV…WGVL), 449 to 469 (GELV…ILIM), and 491 to 511 (LFGW…ILAA).

The protein belongs to the dpy-19 family. Widely expressed.

It is found in the endoplasmic reticulum membrane. It carries out the reaction L-tryptophyl-[protein] + a di-trans,poly-cis-dolichyl beta-D-mannosyl phosphate = C-alpha-D-mannosyl-L-tryptophyl-[protein] + a di-trans,poly-cis-dolichyl phosphate + H(+). It participates in protein modification; protein glycosylation. Its function is as follows. C-mannosyltransferase that mediates the C-mannosylation tryptophan residues on target proteins. The reaction occurs on the luminal side of the endoplasmic reticulum and involves the transfer of a mannose unit from a dolichylphosphate mannose (Dol-P-Man) donor to an acceptor protein containing a WxxW consensus sequence. C-mannosylates the first two tryptophans in the WxxWxxWxxC motif in thrombospondin (TSP) type-1 of UNC5A. Regulates neurite extension during development. This chain is Protein C-mannosyl-transferase DPY19L1 (DPY19L1), found in Homo sapiens (Human).